The primary structure comprises 399 residues: MSQRQSQSPNQTLISITNDTETSSSVVSNDTTHKGWTGDNSPGIEALCAIYITYAGIISVGILGNAILIKVFFKTKSMQTVPNIFITSLAFGDLLLLLTCVPVDATHYLAEGWLFGKVGCKVLSFIRLTSVGVSVFTLTILSADRYKAVVKPLERQPPNAILKTCAKAGGIWIVSMIFALPEAIFSNVYTFQDPNRNVTFESCNSYPISERLLQEIHSLLCFLVFYIIPLSIISVYYSLIARTLYKSTLNIPTEEQSHARKQIESRKRIAKTVLVLVALFALCWLPNHLLYLYHSFTYESYANHSDVPFVIIIFSRVLAFSNSCVNPFALYWLSKTFQQHFKAQLCCLKAEQPEPPLGDIPLNNLTVMGRVPATGSAHVSEISVTLFSGSSAKKGEDKV.

The Extracellular segment spans residues 1–41 (MSQRQSQSPNQTLISITNDTETSSSVVSNDTTHKGWTGDNS). Residues asparagine 10, asparagine 18, and asparagine 29 are each glycosylated (N-linked (GlcNAc...) asparagine). The chain crosses the membrane as a helical span at residues 42 to 63 (PGIEALCAIYITYAGIISVGIL). The Cytoplasmic segment spans residues 64–82 (GNAILIKVFFKTKSMQTVP). The chain crosses the membrane as a helical span at residues 83-103 (NIFITSLAFGDLLLLLTCVPV). The Extracellular segment spans residues 104 to 121 (DATHYLAEGWLFGKVGCK). Residues cysteine 120 and cysteine 203 are joined by a disulfide bond. The helical transmembrane segment at 122–143 (VLSFIRLTSVGVSVFTLTILSA) threads the bilayer. The Cytoplasmic segment spans residues 144–163 (DRYKAVVKPLERQPPNAILK). Residues 164–184 (TCAKAGGIWIVSMIFALPEAI) traverse the membrane as a helical segment. The Extracellular portion of the chain corresponds to 185 to 220 (FSNVYTFQDPNRNVTFESCNSYPISERLLQEIHSLL). Residues 221 to 241 (CFLVFYIIPLSIISVYYSLIA) traverse the membrane as a helical segment. Over 242 to 272 (RTLYKSTLNIPTEEQSHARKQIESRKRIAKT) the chain is Cytoplasmic. The chain crosses the membrane as a helical span at residues 273–293 (VLVLVALFALCWLPNHLLYLY). The Extracellular portion of the chain corresponds to 294 to 313 (HSFTYESYANHSDVPFVIII). Residues 314 to 333 (FSRVLAFSNSCVNPFALYWL) traverse the membrane as a helical segment. Residues 334–399 (SKTFQQHFKA…SSAKKGEDKV (66 aa)) are Cytoplasmic-facing. Cysteine 347 carries the S-palmitoyl cysteine lipid modification.

The protein belongs to the G-protein coupled receptor 1 family. As to quaternary structure, interacts with C6orf89.

The protein resides in the cell membrane. Functionally, role in sperm cell division, maturation, or function. This receptor mediates its action by association with G proteins that activate a phosphatidylinositol-calcium second messenger system. The sequence is that of Bombesin receptor subtype-3 (Brs3) from Mus musculus (Mouse).